We begin with the raw amino-acid sequence, 320 residues long: Malate dehydrogenase (320 aa).

NAD(+)-binding positions include 10–15 (GSGMIG) and D34. Residues R83 and R89 each contribute to the substrate site. Residues N96 and 119–121 (ITN) contribute to the NAD(+) site. N121 and R152 together coordinate substrate. H176 (proton acceptor) is an active-site residue.

The protein belongs to the LDH/MDH superfamily. MDH type 3 family.

The enzyme catalyses (S)-malate + NAD(+) = oxaloacetate + NADH + H(+). Functionally, catalyzes the reversible oxidation of malate to oxaloacetate. The protein is Malate dehydrogenase of Bartonella quintana (strain Toulouse) (Rochalimaea quintana).